The following is a 247-amino-acid chain: ATP synthase subunit a (247 aa).

The next 6 membrane-spanning stretches (helical) occupy residues 24–44 (IAFTNSSAYMLVAVVLTSLLM), 82–102 (FFPFVFTIFMLVTVSNLVGIV), 112–132 (IIVTAALAFLVFFTVLIYGFY), 141–161 (LFVPSGIPIVILPLVVAIEVI), 194–214 (MLGAMGIVGVFGAVLPLALVV), and 219–239 (LELLVAFLQAYVFTILTCIYI).

This sequence belongs to the ATPase A chain family. As to quaternary structure, F-type ATPases have 2 components, CF(1) - the catalytic core - and CF(0) - the membrane proton channel. CF(1) has five subunits: alpha(3), beta(3), gamma(1), delta(1), epsilon(1). CF(0) has three main subunits: a(1), b(2) and c(9-12). The alpha and beta chains form an alternating ring which encloses part of the gamma chain. CF(1) is attached to CF(0) by a central stalk formed by the gamma and epsilon chains, while a peripheral stalk is formed by the delta and b chains.

It localises to the cell inner membrane. In terms of biological role, key component of the proton channel; it plays a direct role in the translocation of protons across the membrane. The sequence is that of ATP synthase subunit a from Nitrobacter hamburgensis (strain DSM 10229 / NCIMB 13809 / X14).